The primary structure comprises 366 residues: Phospho-N-acetylmuramoyl-pentapeptide-transferase (366 aa).

10 consecutive transmembrane segments (helical) span residues 27–47, 71–91, 93–113, 138–158, 174–194, 205–225, 245–265, 268–288, 297–317, and 343–363; these read AALFTSALIVFLFGPAMIASL, TPTMGGLMILTGIVVSSLLWA, LSSIYVVSTLLVTLGFGAIGF, FVIAAVAVFFMMQAALSAGAA, LMLNLGYFFVLFGGFVIVGAG, GLAIVPVMIASAAFGLIAYLA, LAVILGAVIGAGLGFLWFNAP, AIFMGDTGSLALGGLIGTVAV, IIIGGLFVIETLSVIIQVFWF, and QVVIRFWIIAVILAMVGLSTL.

Belongs to the glycosyltransferase 4 family. MraY subfamily. Mg(2+) serves as cofactor.

It is found in the cell inner membrane. The enzyme catalyses UDP-N-acetyl-alpha-D-muramoyl-L-alanyl-gamma-D-glutamyl-meso-2,6-diaminopimeloyl-D-alanyl-D-alanine + di-trans,octa-cis-undecaprenyl phosphate = di-trans,octa-cis-undecaprenyl diphospho-N-acetyl-alpha-D-muramoyl-L-alanyl-D-glutamyl-meso-2,6-diaminopimeloyl-D-alanyl-D-alanine + UMP. It functions in the pathway cell wall biogenesis; peptidoglycan biosynthesis. In terms of biological role, catalyzes the initial step of the lipid cycle reactions in the biosynthesis of the cell wall peptidoglycan: transfers peptidoglycan precursor phospho-MurNAc-pentapeptide from UDP-MurNAc-pentapeptide onto the lipid carrier undecaprenyl phosphate, yielding undecaprenyl-pyrophosphoryl-MurNAc-pentapeptide, known as lipid I. This is Phospho-N-acetylmuramoyl-pentapeptide-transferase from Rhizobium meliloti (strain 1021) (Ensifer meliloti).